Here is a 314-residue protein sequence, read N- to C-terminus: MNNSQISTVTQFVLLGFPGPWKIQIIFFSMILLVYIFTLTGNMAIICAVRWDHRLHTPMYVLLANFSFLEIWYVTCTVPNMLVNFFSKTKTISFSGCFTQFHFFFSLGTTECFFLCVMAYDRYLAICHPLHYPSIMTGQLCGILVSLCWLIGFLGHSISIFFIFQLPFCGPNIIDHFLCDVDPLMALSSAPTHIIGHVFHSVSSLFINLTMVYILGSYTLVLRTVLQVPSSAGWQKAISTCGSHLVVVSLFYGAIMLMYVSPTPGNSVAMHKLITLIYSVVTPVLNPLIYSLRNKDMKYALHHVFCGMRIIQRS.

The Extracellular segment spans residues 1–24 (MNNSQISTVTQFVLLGFPGPWKIQ). N-linked (GlcNAc...) asparagine glycosylation occurs at Asn2. The chain crosses the membrane as a helical span at residues 25–45 (IIFFSMILLVYIFTLTGNMAI). At 46 to 57 (ICAVRWDHRLHT) the chain is on the cytoplasmic side. A helical membrane pass occupies residues 58 to 78 (PMYVLLANFSFLEIWYVTCTV). The Extracellular segment spans residues 79–97 (PNMLVNFFSKTKTISFSGC). An intrachain disulfide couples Cys97 to Cys179. A helical transmembrane segment spans residues 98-118 (FTQFHFFFSLGTTECFFLCVM). Topologically, residues 119–142 (AYDRYLAICHPLHYPSIMTGQLCG) are cytoplasmic. A helical membrane pass occupies residues 143–163 (ILVSLCWLIGFLGHSISIFFI). Residues 164 to 201 (FQLPFCGPNIIDHFLCDVDPLMALSSAPTHIIGHVFHS) are Extracellular-facing. The chain crosses the membrane as a helical span at residues 202-222 (VSSLFINLTMVYILGSYTLVL). Residues 223-244 (RTVLQVPSSAGWQKAISTCGSH) are Cytoplasmic-facing. Residues 245–265 (LVVVSLFYGAIMLMYVSPTPG) form a helical membrane-spanning segment. Residues 266-271 (NSVAMH) are Extracellular-facing. Residues 272-292 (KLITLIYSVVTPVLNPLIYSL) form a helical membrane-spanning segment. Residues 293–314 (RNKDMKYALHHVFCGMRIIQRS) lie on the Cytoplasmic side of the membrane.

This sequence belongs to the G-protein coupled receptor 1 family.

The protein localises to the cell membrane. Odorant receptor. Activated by isovaleric acid. The chain is Olfactory receptor 11H7 (OR11H7) from Homo sapiens (Human).